A 126-amino-acid polypeptide reads, in one-letter code: Ribosome-binding factor A (126 aa).

Belongs to the RbfA family. In terms of assembly, monomer. Binds 30S ribosomal subunits, but not 50S ribosomal subunits or 70S ribosomes.

The protein resides in the cytoplasm. Its function is as follows. One of several proteins that assist in the late maturation steps of the functional core of the 30S ribosomal subunit. Associates with free 30S ribosomal subunits (but not with 30S subunits that are part of 70S ribosomes or polysomes). Required for efficient processing of 16S rRNA. May interact with the 5'-terminal helix region of 16S rRNA. This chain is Ribosome-binding factor A, found in Nitrosospira multiformis (strain ATCC 25196 / NCIMB 11849 / C 71).